Reading from the N-terminus, the 183-residue chain is Potassium-transporting ATPase KdpC subunit (183 aa).

A helical transmembrane segment spans residues 10–30 (LTVFTLILFAVIYPLAIYGIA).

It belongs to the KdpC family. In terms of assembly, the system is composed of three essential subunits: KdpA, KdpB and KdpC.

It localises to the cell inner membrane. Part of the high-affinity ATP-driven potassium transport (or Kdp) system, which catalyzes the hydrolysis of ATP coupled with the electrogenic transport of potassium into the cytoplasm. This subunit acts as a catalytic chaperone that increases the ATP-binding affinity of the ATP-hydrolyzing subunit KdpB by the formation of a transient KdpB/KdpC/ATP ternary complex. The sequence is that of Potassium-transporting ATPase KdpC subunit from Flavobacterium johnsoniae (strain ATCC 17061 / DSM 2064 / JCM 8514 / BCRC 14874 / CCUG 350202 / NBRC 14942 / NCIMB 11054 / UW101) (Cytophaga johnsonae).